A 117-amino-acid chain; its full sequence is Large ribosomal subunit protein uL18 (117 aa).

This sequence belongs to the universal ribosomal protein uL18 family. As to quaternary structure, part of the 50S ribosomal subunit; part of the 5S rRNA/L5/L18/L25 subcomplex. Contacts the 5S and 23S rRNAs.

In terms of biological role, this is one of the proteins that bind and probably mediate the attachment of the 5S RNA into the large ribosomal subunit, where it forms part of the central protuberance. This chain is Large ribosomal subunit protein uL18, found in Pectobacterium carotovorum subsp. carotovorum (strain PC1).